A 106-amino-acid polypeptide reads, in one-letter code: ATP-dependent Clp protease adapter protein ClpS (106 aa).

Polar residues predominate over residues 1-13; that stretch reads MGNNSTWSQSENL. The interval 1-21 is disordered; it reads MGNNSTWSQSENLTADKQKEK.

It belongs to the ClpS family. Binds to the N-terminal domain of the chaperone ClpA.

In terms of biological role, involved in the modulation of the specificity of the ClpAP-mediated ATP-dependent protein degradation. This chain is ATP-dependent Clp protease adapter protein ClpS, found in Pectobacterium carotovorum subsp. carotovorum (strain PC1).